A 438-amino-acid chain; its full sequence is Telomeric repeat-binding factor 1 (438 aa).

Positions 1 to 10 (MAEDVSSTAP) are enriched in polar residues. Residues 1 to 36 (MAEDVSSTAPSPRGCADGRDADPTEEQMAQTQRNDQ) are disordered. An N-acetylalanine modification is found at alanine 2. A Phosphoserine modification is found at serine 11. Positions 58-268 (EEEEEDSGLV…AAAKVVESKR (211 aa)) are TRFH dimerization. Lysine 213 participates in a covalent cross-link: Glycyl lysine isopeptide (Lys-Gly) (interchain with G-Cter in SUMO2). A Phosphoserine; by ATM modification is found at serine 219. An interaction with RLIM region spans residues 265–378 (ESKRTRTITS…PVTPEKHRAR (114 aa)). The tract at residues 268–311 (RTRTITSQDKPSGNDVEMETEANLDTRKSVSDKQSAVTESSEGT) is disordered. Positions 299-311 (DKQSAVTESSEGT) are enriched in polar residues. Residue lysine 325 forms a Glycyl lysine isopeptide (Lys-Gly) (interchain with G-Cter in SUMO2) linkage. The tract at residues 326 to 375 (LQHGTQQQDLNKKERRVGTPQSTKKKKESRRATESRIPVSKSQPVTPEKH) is disordered. Residues 337–356 (KKERRVGTPQSTKKKKESRR) carry the Nuclear localization signal motif. Residue lysine 366 forms a Glycyl lysine isopeptide (Lys-Gly) (interchain with G-Cter in SUMO2) linkage. Residues 375 to 432 (HRARKRQAWLWEEDKNLRSGVRKYGEGNWSKILLHYKFNNRTSVMLKDRWRTMKKLKL) enclose the HTH myb-type domain. A DNA-binding region (H-T-H motif) is located at residues 403–428 (WSKILLHYKFNNRTSVMLKDRWRTMK).

Homodimer; can contain both isoforms. Found in a complex with POT1; TINF2 and TNKS1. Interacts with ATM, TINF2, TNKS1, TNKS2, PINX1, NEK2 and MAPRE1. Component of the shelterin complex (telosome) composed of TERF1, TERF2, TINF2, TERF2IP ACD and POT1. Interacts with RLIM (via N-terminus). Interacts with FBXO4. Interaction with TINF2 protects against interaction with FBXO4 and subsequent polyubiquitination and proteasomal degradation. Interacts with GNL3L; this interaction promotes homodimerization. Interacts with TIN2. Interactions with GNL3L and TIN2 are mutually exclusive. Interacts with RTEL1. Interacts with CCDC79/TERB1. In terms of processing, phosphorylated preferentially on Ser-219 in an ATM-dependent manner in response to ionizing DNA damage. Post-translationally, ADP-ribosylation by TNKS1 or TNKS2 diminishes its ability to bind to telomeric DNA. Ubiquitinated by RLIM/RNF12, leading to its degradation by the proteasome. Ubiquitinated by a SCF (SKP1-CUL1-F-box protein) ubiquitin-protein ligase complex, leading to its degradation by the proteasome.

The protein resides in the nucleus. The protein localises to the chromosome. It is found in the telomere. Its subcellular location is the cytoplasm. It localises to the cytoskeleton. The protein resides in the spindle. Functionally, binds the telomeric double-stranded 5'-TTAGGG-3' repeat and negatively regulates telomere length. Involved in the regulation of the mitotic spindle. Component of the shelterin complex (telosome) that is involved in the regulation of telomere length and protection. Shelterin associates with arrays of double-stranded 5'-TTAGGG-3' repeats added by telomerase and protects chromosome ends; without its protective activity, telomeres are no longer hidden from the DNA damage surveillance and chromosome ends are inappropriately processed by DNA repair pathways. In Cricetulus griseus (Chinese hamster), this protein is Telomeric repeat-binding factor 1 (TERF1).